Consider the following 94-residue polypeptide: Neutrophil antibiotic peptide NP-2 (94 aa).

Residues 1–19 form the signal peptide; that stretch reads MRTLTLLTALLLLALHTQA. A propeptide spanning residues 20–62 is cleaved from the precursor; sequence KSPQGTAEEAPDQEQLVMEDQDISISFGGDKGTALQDADVKAG. 3 cysteine pairs are disulfide-bonded: Cys65-Cys93, Cys67-Cys82, and Cys72-Cys92.

The protein belongs to the alpha-defensin family. In terms of tissue distribution, highest expression in bone marrow and to a much lesser extent in small intestine.

The protein resides in the secreted. In terms of biological role, active in vitro against S.aureus, fungi, Gram-positive and Gram-negative bacteria and to a lesser extent against an enveloped virus. This is Neutrophil antibiotic peptide NP-2 (Defa) from Rattus norvegicus (Rat).